The chain runs to 324 residues: MGAMIVKEVYETAEKIKSMEIRGAGRIARAAAQALMIQAEKSKAKEPEELWNELKVASKILYNTRPTAVSLPNALRYVMHRVKAAYLGGADLETLRFTAINSAKEFIYNSEKAIERIGEIGAKRIEDGDIIMTHCHSKAAISVMKKAFEQGKNIKVIVTETRPKWQGKITAKELASYGIPVIYIVDSAARHYMKMTDKVVMGADSITANGAVINKIGTSLIALTAKEHRVWVMIAAETYKFHPATMLGQLVEIEMRDPTEVIPEEELRTWPKNIEVWNPAFDVTPPEYIDVIITERGIIPPYAAIDILKEEFGWALKYKEPWED.

Substrate contacts are provided by residues 22-25 (RGAG) and Arg-65. Cys-135 functions as the Proton acceptor in the catalytic mechanism. 137–139 (SKA) serves as a coordination point for substrate. Catalysis depends on Asp-204, which acts as the Proton donor. Residues 214–215 (NK) and Lys-240 each bind substrate.

It belongs to the eIF-2B alpha/beta/delta subunits family. R15P isomerase subfamily.

The catalysed reaction is alpha-D-ribose 1,5-bisphosphate = D-ribulose 1,5-bisphosphate. In terms of biological role, catalyzes the isomerization of ribose 1,5-bisphosphate (R15P) to ribulose 1,5-bisphosphate (RuBP), the CO(2) acceptor and substrate for RubisCO. Functions in an archaeal AMP degradation pathway, together with AMP phosphorylase and RubisCO. The chain is Ribose 1,5-bisphosphate isomerase from Pyrococcus horikoshii (strain ATCC 700860 / DSM 12428 / JCM 9974 / NBRC 100139 / OT-3).